The primary structure comprises 186 residues: MPNEFELAVAALQRDGVIAYATEAVFGLGCDPDSESAVHRLLAIKQRPVEKGLILIAADLAQLQDYIDLDQLTSEQLARVEASWPGPFTWIMPARSNTPAWLTGQFTTLAVRVTAHPQVQALCRAFGKPLVSTSANLTGEEPARRVADIGELLASQLAYILPGEVGGQANPSEIKDARTGAIIRPS.

Residues 2–186 enclose the YrdC-like domain; it reads PNEFELAVAA…ARTGAIIRPS (185 aa).

This sequence belongs to the SUA5 family. TsaC subfamily.

Its subcellular location is the cytoplasm. It catalyses the reaction L-threonine + hydrogencarbonate + ATP = L-threonylcarbamoyladenylate + diphosphate + H2O. Functionally, required for the formation of a threonylcarbamoyl group on adenosine at position 37 (t(6)A37) in tRNAs that read codons beginning with adenine. Catalyzes the conversion of L-threonine, HCO(3)(-)/CO(2) and ATP to give threonylcarbamoyl-AMP (TC-AMP) as the acyladenylate intermediate, with the release of diphosphate. This Aeromonas hydrophila subsp. hydrophila (strain ATCC 7966 / DSM 30187 / BCRC 13018 / CCUG 14551 / JCM 1027 / KCTC 2358 / NCIMB 9240 / NCTC 8049) protein is Threonylcarbamoyl-AMP synthase.